A 71-amino-acid polypeptide reads, in one-letter code: MHRKKRKKEKKRTEKDNTTNLPPLFLFPCSLSLPTLLAPVHYIPTRLTHHQAENQLFLLLFQPIIVKPLRS.

Over residues 1-10 (MHRKKRKKEK) the composition is skewed to basic residues. The segment at 1–20 (MHRKKRKKEKKRTEKDNTTN) is disordered. A helical transmembrane segment spans residues 21–43 (LPPLFLFPCSLSLPTLLAPVHYI).

It is found in the membrane. This is an uncharacterized protein from Saccharomyces cerevisiae (strain ATCC 204508 / S288c) (Baker's yeast).